The chain runs to 220 residues: MLSVILKSSVRGLGKAGEIAKVRPGYARYLLADGKAVRATKDNVALLEQKLALIEEENSKKLAEAEGVAKSLGAERLIIVRQSSDDGKLFGSVTVRDVSKLLCDLGYDIQPRCVSFSEVIKRTGEYEINVELHADLVAALQLHVVRNESEAERVRLGIAKSEDQAAAAAEVEQAEDVAAAEQQDSSPVDDHADDADGATGGEGRDEGAGDASDGEEMPST.

Residues Ala167–Asp184 show a composition bias toward low complexity. Positions Ala167–Thr220 are disordered.

Belongs to the bacterial ribosomal protein bL9 family.

In terms of biological role, binds to the 23S rRNA. This chain is Large ribosomal subunit protein bL9, found in Anaplasma marginale (strain St. Maries).